The sequence spans 252 residues: Imidazole glycerol phosphate synthase subunit HisF (252 aa).

Residues aspartate 13 and aspartate 132 contribute to the active site.

This sequence belongs to the HisA/HisF family. As to quaternary structure, heterodimer of HisH and HisF.

It localises to the cytoplasm. It catalyses the reaction 5-[(5-phospho-1-deoxy-D-ribulos-1-ylimino)methylamino]-1-(5-phospho-beta-D-ribosyl)imidazole-4-carboxamide + L-glutamine = D-erythro-1-(imidazol-4-yl)glycerol 3-phosphate + 5-amino-1-(5-phospho-beta-D-ribosyl)imidazole-4-carboxamide + L-glutamate + H(+). Its pathway is amino-acid biosynthesis; L-histidine biosynthesis; L-histidine from 5-phospho-alpha-D-ribose 1-diphosphate: step 5/9. IGPS catalyzes the conversion of PRFAR and glutamine to IGP, AICAR and glutamate. The HisF subunit catalyzes the cyclization activity that produces IGP and AICAR from PRFAR using the ammonia provided by the HisH subunit. The sequence is that of Imidazole glycerol phosphate synthase subunit HisF from Campylobacter curvus (strain 525.92).